The following is a 695-amino-acid chain: DNA ligase (695 aa).

Residues 39–43 (DAEYD), 88–89 (SL), and E124 contribute to the NAD(+) site. K126 serves as the catalytic N6-AMP-lysine intermediate. NAD(+)-binding residues include R147, E183, K299, and K323. C419, C422, C437, and C443 together coordinate Zn(2+). Positions 612–695 (PAQGHLSGKT…ELAGIGPVGP (84 aa)) constitute a BRCT domain.

Belongs to the NAD-dependent DNA ligase family. LigA subfamily. Mg(2+) serves as cofactor. Requires Mn(2+) as cofactor.

It carries out the reaction NAD(+) + (deoxyribonucleotide)n-3'-hydroxyl + 5'-phospho-(deoxyribonucleotide)m = (deoxyribonucleotide)n+m + AMP + beta-nicotinamide D-nucleotide.. DNA ligase that catalyzes the formation of phosphodiester linkages between 5'-phosphoryl and 3'-hydroxyl groups in double-stranded DNA using NAD as a coenzyme and as the energy source for the reaction. It is essential for DNA replication and repair of damaged DNA. In Gluconacetobacter diazotrophicus (strain ATCC 49037 / DSM 5601 / CCUG 37298 / CIP 103539 / LMG 7603 / PAl5), this protein is DNA ligase.